The sequence spans 322 residues: Ferric-anguibactin-binding protein FatB (322 aa).

The N-terminal stretch at 1–22 is a signal peptide; that stretch reads MFKSTLNIAVAIVCSSLVTLTG. A lipid anchor (N-palmitoyl cysteine) is attached at cysteine 23. The S-diacylglycerol cysteine moiety is linked to residue cysteine 23. Residues 57 to 322 form the Fe/B12 periplasmic-binding domain; sequence RVAALDMNEV…IDDIIKGYQS (266 aa).

It belongs to the bacterial solute-binding protein 8 family. In terms of assembly, part of an iron transport system composed of the outer membrane receptor FatA, the periplasmic binding protein FatB and the inner membrane proteins FatC and FatD.

Its subcellular location is the cell inner membrane. In terms of biological role, involved in the uptake of iron in complex with the siderophore anguibactin. Binds ferric-anguibactin in the periplasm and mediates its transport into the cytoplasm. The protein is Ferric-anguibactin-binding protein FatB of Vibrio anguillarum (strain ATCC 68554 / 775) (Listonella anguillarum).